The following is a 352-amino-acid chain: MGIDKRKNDHIYLASSDLSQVGTALFEEVVLIHNALPEIDFSDIDLSTNFLGAPVKAPFGIGAMTGGTELAGKINAELAKAAEEFGIPMYVGSQRIALVKPEVRWTFEVVKQNAPSIPKIANLGAPQLAQLSEKQLVDWVVQAVDMIDAYAVAVHLNAAQEVVQPEGEPSFRGVLEKLKIVKRAAGRPLIVKEVGNGISKEVAAKLAEVADAIDVGGLGGTSFVAIEGARAADAWLQRRVAETFKYWGIPTAASICEVKSVYRGFVIASGGIRSGLDGARALALGAHFFTMSQPLLKATLEGRLREEIEAVITEVKIAMFLTGVRRPQELAQVPRVYGPRLRAWLEQRGTTC.

6-7 (RK) serves as a coordination point for substrate. FMN contacts are provided by residues 63-65 (AMT), Ser-93, and Asn-122. 93-95 (SQR) contacts substrate. Residue Gln-160 participates in substrate binding. Glu-161 is a binding site for Mg(2+). Residues Lys-192, Thr-221, 271–273 (GIR), and 292–293 (SQ) each bind FMN.

This sequence belongs to the IPP isomerase type 2 family. Homooctamer. Dimer of tetramers. It depends on FMN as a cofactor. NADPH serves as cofactor. Requires Mg(2+) as cofactor.

Its subcellular location is the cytoplasm. It carries out the reaction isopentenyl diphosphate = dimethylallyl diphosphate. Functionally, involved in the biosynthesis of isoprenoids. Catalyzes the 1,3-allylic rearrangement of the homoallylic substrate isopentenyl (IPP) to its allylic isomer, dimethylallyl diphosphate (DMAPP). The polypeptide is Isopentenyl-diphosphate delta-isomerase (Pyrobaculum arsenaticum (strain DSM 13514 / JCM 11321 / PZ6)).